The sequence spans 122 residues: MKTQKQYLGAFGEDVALQQYLDDQATLLDRNVRYSCGELDLIVRSASGVVVFVEVKTRRGSAFDSAAAVNNQKMLRMRRAAALWLEGKPYTPIRFDVVAIVLDPHTGRPEITVYEDVEHGAR.

This sequence belongs to the UPF0102 family.

The polypeptide is UPF0102 protein Cgl2031/cg2228 (Corynebacterium glutamicum (strain ATCC 13032 / DSM 20300 / JCM 1318 / BCRC 11384 / CCUG 27702 / LMG 3730 / NBRC 12168 / NCIMB 10025 / NRRL B-2784 / 534)).